The following is a 330-amino-acid chain: AA9 family lytic polysaccharide monooxygenase E (330 aa).

The first 20 residues, 1 to 20, serve as a signal peptide directing secretion; that stretch reads MRSTLVTGLIAGLLSQQAAA. Positions 21 and 99 each coordinate Cu(2+). Cys58 and Cys193 are disulfide-bonded. Residues His179 and Gln188 each contribute to the O2 site. Tyr190 serves as a coordination point for Cu(2+). One can recognise a CBM1 domain in the interval 293 to 330; the sequence is CSVAKYQQCGGTGYTGCTSCASGSTCSAVSPPYYSQCV.

This sequence belongs to the polysaccharide monooxygenase AA9 family. Requires Cu(2+) as cofactor.

It localises to the secreted. The catalysed reaction is [(1-&gt;4)-beta-D-glucosyl]n+m + reduced acceptor + O2 = 4-dehydro-beta-D-glucosyl-[(1-&gt;4)-beta-D-glucosyl]n-1 + [(1-&gt;4)-beta-D-glucosyl]m + acceptor + H2O.. Its function is as follows. Lytic polysaccharide monooxygenase (LPMO) that depolymerizes crystalline and amorphous polysaccharides via the oxidation of scissile alpha- or beta-(1-4)-glycosidic bonds, yielding exclusively C1 oxidation products. Catalysis by LPMOs requires the reduction of the active-site copper from Cu(II) to Cu(I) by a reducing agent and H(2)O(2) or O(2) as a cosubstrate. This chain is AA9 family lytic polysaccharide monooxygenase E (gh61-5), found in Neurospora crassa (strain ATCC 24698 / 74-OR23-1A / CBS 708.71 / DSM 1257 / FGSC 987).